A 418-amino-acid polypeptide reads, in one-letter code: Creatine kinase U-type, mitochondrial (418 aa).

A mitochondrion-targeting transit peptide spans Met-1–Ala-39. The cardiolipin-binding stretch occupies residues Ala-40–Met-64. A Phosphagen kinase N-terminal domain is found at Arg-46 to Asn-132. Ser-152 carries the post-translational modification Phosphoserine. A Phosphagen kinase C-terminal domain is found at Tyr-159–Leu-401. Residue Ser-162–Arg-166 participates in ATP binding. The residue at position 197 (Ser-197) is a Phosphoserine. Phosphothreonine is present on Thr-214. His-225 contacts ATP. Position 233 is a phosphoserine (Ser-233). ATP contacts are provided by residues Arg-270, Arg-326, Arg-354 to Val-359, and Asp-369. Thr-356 carries the post-translational modification Phosphothreonine.

This sequence belongs to the ATP:guanido phosphotransferase family. In terms of assembly, exists as an octamer composed of four MTCK homodimers. In many tissues, with highest levels in brain gut and kidney. In the kidney localized primarily in the outer medulla in the thick ascending limb and distal convoluted tubule.

It is found in the mitochondrion inner membrane. The catalysed reaction is creatine + ATP = N-phosphocreatine + ADP + H(+). Its function is as follows. Reversibly catalyzes the transfer of phosphate between ATP and various phosphogens (e.g. creatine phosphate). Creatine kinase isoenzymes play a central role in energy transduction in tissues with large, fluctuating energy demands, such as skeletal muscle, heart, brain and spermatozoa. This Rattus norvegicus (Rat) protein is Creatine kinase U-type, mitochondrial (Ckmt1).